Here is a 375-residue protein sequence, read N- to C-terminus: Serine protease 23 (375 aa).

The first 23 residues, 1–23, serve as a signal peptide directing secretion; sequence MAGTPGHPIFLLLLLRAIGQVSP. Residue N93 is glycosylated (N-linked (GlcNAc...) asparagine). C153 and C169 are disulfide-bonded. Catalysis depends on H168, which acts as the Charge relay system. N-linked (GlcNAc...) asparagine glycosylation occurs at N199. Residues D232 and S308 each act as charge relay system in the active site.

Belongs to the peptidase S1 family.

It is found in the secreted. The chain is Serine protease 23 (PRSS23) from Bos taurus (Bovine).